The sequence spans 233 residues: NAD(P)H-hydrate epimerase (233 aa).

A YjeF N-terminal domain is found at 15–218 (SQQFDVELMS…KLQEKYNFIV (204 aa)). Residue 67 to 71 (NNGGD) coordinates (6S)-NADPHX. N68 and D128 together coordinate K(+). (6S)-NADPHX-binding positions include 132-138 (GFSFKPP), Y143, and D161. Residue S164 participates in K(+) binding.

Belongs to the NnrE/AIBP family. It depends on K(+) as a cofactor.

It carries out the reaction (6R)-NADHX = (6S)-NADHX. The catalysed reaction is (6R)-NADPHX = (6S)-NADPHX. Its function is as follows. Catalyzes the epimerization of the S- and R-forms of NAD(P)HX, a damaged form of NAD(P)H that is a result of enzymatic or heat-dependent hydration. This is a prerequisite for the S-specific NAD(P)H-hydrate dehydratase to allow the repair of both epimers of NAD(P)HX. The protein is NAD(P)H-hydrate epimerase of Paramecium tetraurelia.